The following is a 226-amino-acid chain: Fibrillarin-like rRNA/tRNA 2'-O-methyltransferase (226 aa).

Residues 85–86, 104–105, 129–130, and 149–152 each bind S-adenosyl-L-methionine; these read TT, EF, DA, and DVAQ.

This sequence belongs to the methyltransferase superfamily. Fibrillarin family. In terms of assembly, interacts with nop5. Component of box C/D small ribonucleoprotein (sRNP) particles that contain rpl7ae, FlpA and nop5, plus a guide RNA.

In terms of biological role, involved in pre-rRNA and tRNA processing. Utilizes the methyl donor S-adenosyl-L-methionine to catalyze the site-specific 2'-hydroxyl methylation of ribose moieties in rRNA and tRNA. Site specificity is provided by a guide RNA that base pairs with the substrate. Methylation occurs at a characteristic distance from the sequence involved in base pairing with the guide RNA. This is Fibrillarin-like rRNA/tRNA 2'-O-methyltransferase from Thermococcus onnurineus (strain NA1).